A 128-amino-acid chain; its full sequence is Prokineticin-2 (128 aa).

Residues 1-27 form the signal peptide; that stretch reads MRSSRCARLLLLLLLPPLLLTPPAGDA. 5 disulfide bridges follow: Cys-34–Cys-46, Cys-40–Cys-58, Cys-45–Cys-106, Cys-68–Cys-114, and Cys-108–Cys-124. The interval 71–95 is disordered; it reads MTRKNHFGNGRQERRKRKRRRKKKV. The span at 83–95 shows a compositional bias: basic residues; that stretch reads ERRKRKRRRKKKV.

It belongs to the AVIT (prokineticin) family.

It is found in the secreted. Its function is as follows. May function as an output molecule from the suprachiasmatic nucleus (SCN) that transmits behavioral circadian rhythm. May also function locally within the SCN to synchronize output. Potently contracts gastrointestinal (GI) smooth muscle. The protein is Prokineticin-2 (PROK2) of Bos taurus (Bovine).